A 293-amino-acid chain; its full sequence is 2-pyrone-4,6-dicarboxylate hydrolase (293 aa).

Residues 1-20 (MTNDERILSWNETPSKPRYT) form a disordered region. Substrate is bound by residues 29 to 31 (HCH), Tyr47, Ser75, Arg122, Arg128, Tyr154, and His178. The active-site Proton acceptor is Asp246. Substrate is bound at residue Asn251.

The protein belongs to the metallo-dependent hydrolases superfamily. PDC hydrolase family. In terms of assembly, monomer.

The enzyme catalyses 2-oxo-2H-pyran-4,6-dicarboxylate + H2O = (1E)-4-oxobut-1-ene-1,2,4-tricarboxylate + H(+). Its pathway is secondary metabolite metabolism; lignin degradation. With respect to regulation, strongly inhibited by 1 mM Zn(2+) ions. Also inhibited by pyridine-2,4-dicarboxylic acid, 5-hydroxyisophthalic acid and 5,5'-dithiobis(2-nitrobenzoic acid) (Ellman reagent). Its function is as follows. Contributes to the degradation of lignin at the level of the protocatechuate 4,5-cleavage pathway. Catalyzes the hydrolysis of 2-pyrone-4,6-dicarboxylate (PDC) to (4E)-oxalomesaconate (OMA). The keto form of OMA can tautomerize into the enol form, 4-carboxy-2-hydroxymuconate (CHM), under certain pH conditions. Also catalyzes the reverse reaction. Is essential for the growth of Sphingobium sp. SYK-6 on vanillate but is not responsible for the growth of this strain on syringate. This is 2-pyrone-4,6-dicarboxylate hydrolase from Sphingobium sp. (strain NBRC 103272 / SYK-6).